A 314-amino-acid polypeptide reads, in one-letter code: Ribosomal RNA small subunit methyltransferase H (314 aa).

S-adenosyl-L-methionine-binding positions include 36–38, aspartate 56, phenylalanine 83, aspartate 104, and glutamine 111; that span reads AGH.

The protein belongs to the methyltransferase superfamily. RsmH family.

It localises to the cytoplasm. The catalysed reaction is cytidine(1402) in 16S rRNA + S-adenosyl-L-methionine = N(4)-methylcytidine(1402) in 16S rRNA + S-adenosyl-L-homocysteine + H(+). Functionally, specifically methylates the N4 position of cytidine in position 1402 (C1402) of 16S rRNA. This Brevibacillus brevis (strain 47 / JCM 6285 / NBRC 100599) protein is Ribosomal RNA small subunit methyltransferase H.